Here is a 1154-residue protein sequence, read N- to C-terminus: ATP-dependent helicase/deoxyribonuclease subunit B (1154 aa).

The 284-residue stretch at 1 to 284 folds into the UvrD-like helicase ATP-binding domain; sequence MSVRFIIGRS…EQLRHNVRHK (284 aa). ATP is bound at residue 8-15; the sequence is GRSGSGKT. Residues 279-583 form the UvrD-like helicase C-terminal domain; it reads HNVRHKHEEL…QFSLVPPATD (305 aa). Residues cysteine 799, cysteine 1120, cysteine 1123, and cysteine 1129 each coordinate [4Fe-4S] cluster.

Belongs to the helicase family. AddB/RexB type 1 subfamily. As to quaternary structure, heterodimer of AddA and AddB. Mg(2+) serves as cofactor. [4Fe-4S] cluster is required as a cofactor.

In terms of biological role, the heterodimer acts as both an ATP-dependent DNA helicase and an ATP-dependent, dual-direction single-stranded exonuclease. Recognizes the chi site generating a DNA molecule suitable for the initiation of homologous recombination. The AddB subunit has 5' -&gt; 3' nuclease activity but not helicase activity. In Anoxybacillus flavithermus (strain DSM 21510 / WK1), this protein is ATP-dependent helicase/deoxyribonuclease subunit B.